The sequence spans 131 residues: Fluoride-specific ion channel FluC 1 (131 aa).

Helical transmembrane passes span 4–24, 40–60, 73–93, and 108–128; these read LALP…GAWL, HWGT…VLAL, LILL…TFAV, and LVLA…GVGL. 2 residues coordinate Na(+): G83 and S86.

Belongs to the fluoride channel Fluc/FEX (TC 1.A.43) family.

The protein resides in the cell inner membrane. The catalysed reaction is fluoride(in) = fluoride(out). Na(+) is not transported, but it plays an essential structural role and its presence is essential for fluoride channel function. Fluoride-specific ion channel. Important for reducing fluoride concentration in the cell, thus reducing its toxicity. The protein is Fluoride-specific ion channel FluC 1 of Prochlorococcus marinus (strain MIT 9313).